Here is a 770-residue protein sequence, read N- to C-terminus: MDNVVDPWYINPSGFAKDTQDEEYVQHHDNVNPTIPPPDNYILNNENDDGLDNLLGMDYYNIDDLLTQELRDLDIPLVPSPKTGDGSSDKKNIDRTWNLGDENNKVSHYSKKSMSSHKRGLSGTAIFGFLGHNKTLSISSLQQSILNMSKDPQPMELINELGNHNTVKNNNDDFDHIRENDGENSYLSQVLLKQQEELRIALEKQKEVNEKLEKQLRDNQIQQEKLRKVLEEQEEVAQKLVSGATNSNSKPGSPVILKTPAMQNGRMKDNAIIVTTNSANGGYQFPPPTLISPRMSNTSINGSPSRKYHRQRYPNKSPESNGLNLFSSNSGYLRDSELLSFSPQNYNLNLDGLTYNDHNNTSDKNNNDKKNSTGDNIFRLFEKTSPGGLSISPRINGNSLRSPFLVGTDKSRDDRYAAGTFTPRTQLSPIHKKRESVVSTVSTISQLQDDTEPIHMRNTQNPTLRNANALASSSVLPPIPGSSNNTPIKNSLPQKHVFQHTPVKAPPKNGSNLAPLLNAPDLTDHQLEIKTPIRNNSHCEVESYPQVPPVTHDIHKSPTLHSTSPLPDEIIPRTTPMKITKKPTTLPPGTIDQYVKELPDKLFECLYPNCNKVFKRRYNIRSHIQTHLQDRPYSCDFPGCTKAFVRNHDLIRHKISHNAKKYICPCGKRFNREDALMVHRSRMICTGGKKLEHSINKKLTSPKKSLLDSPHDTSPVKETIARDKDGSVLMKMEEQLRDDMRKHGLLDPPPSTAAHEQNSNRTLSNETDAL.

The tract at residues 77–97 (LVPSPKTGDGSSDKKNIDRTW) is disordered. Residues serine 80, serine 122, serine 247, serine 249, and serine 253 each carry the phosphoserine modification. Threonine 259 is subject to Phosphothreonine. A disordered region spans residues 286-323 (PPPTLISPRMSNTSINGSPSRKYHRQRYPNKSPESNGL). Residues 294–304 (RMSNTSINGSP) show a composition bias toward polar residues. Serine 385, serine 392, and serine 483 each carry phosphoserine. Threonine 486 and threonine 501 each carry phosphothreonine. Serine 564 carries the post-translational modification Phosphoserine. C2H2-type zinc fingers lie at residues 603 to 627 (FECLYPNCNKVFKRRYNIRSHIQTH) and 633 to 657 (YSCDFPGCTKAFVRNHDLIRHKISH). The C2H2-type 3; atypical zinc finger occupies 662–685 (YICPCGKRFNREDALMVHRSRMIC). The tract at residues 699–770 (LTSPKKSLLD…RTLSNETDAL (72 aa)) is disordered. A compositionally biased stretch (basic and acidic residues) spans 705–745 (SLLDSPHDTSPVKETIARDKDGSVLMKMEEQLRDDMRKHGL). Phosphoserine is present on residues serine 709 and serine 714. The span at 754–770 (AHEQNSNRTLSNETDAL) shows a compositional bias: polar residues.

The protein localises to the nucleus. Plays a role in regulating basal-level expression of CUP1. Activates EGT2 transcription in the absence of SWI5. The protein is Metallothionein expression activator (ACE2) of Saccharomyces cerevisiae (strain ATCC 204508 / S288c) (Baker's yeast).